A 134-amino-acid chain; its full sequence is Putative transposase InsN for insertion sequence element IS911A (134 aa).

The protein belongs to the transposase 8 family.

Its function is as follows. Involved in the transposition of the insertion sequence IS911. The polypeptide is Putative transposase InsN for insertion sequence element IS911A (insN1) (Escherichia coli (strain K12)).